Consider the following 283-residue polypeptide: Thymidylate synthase (283 aa).

Arg21 serves as a coordination point for dUMP. Position 51 (His51) interacts with (6R)-5,10-methylene-5,6,7,8-tetrahydrofolate. 123 to 124 (RR) is a binding site for dUMP. Cys156 (nucleophile) is an active-site residue. DUMP contacts are provided by residues 185–188 (RSAD), Asn196, and 226–228 (HIY). A (6R)-5,10-methylene-5,6,7,8-tetrahydrofolate-binding site is contributed by Asp188. Ala282 is a binding site for (6R)-5,10-methylene-5,6,7,8-tetrahydrofolate.

The protein belongs to the thymidylate synthase family. Bacterial-type ThyA subfamily. Homodimer.

It is found in the cytoplasm. The catalysed reaction is dUMP + (6R)-5,10-methylene-5,6,7,8-tetrahydrofolate = 7,8-dihydrofolate + dTMP. The protein operates within pyrimidine metabolism; dTTP biosynthesis. In terms of biological role, catalyzes the reductive methylation of 2'-deoxyuridine-5'-monophosphate (dUMP) to 2'-deoxythymidine-5'-monophosphate (dTMP) while utilizing 5,10-methylenetetrahydrofolate (mTHF) as the methyl donor and reductant in the reaction, yielding dihydrofolate (DHF) as a by-product. This enzymatic reaction provides an intracellular de novo source of dTMP, an essential precursor for DNA biosynthesis. This Flavobacterium johnsoniae (strain ATCC 17061 / DSM 2064 / JCM 8514 / BCRC 14874 / CCUG 350202 / NBRC 14942 / NCIMB 11054 / UW101) (Cytophaga johnsonae) protein is Thymidylate synthase.